The following is a 272-amino-acid chain: Phosphate import ATP-binding protein PstB (272 aa).

Positions 26-267 (LEIRNLDLSY…PRKRKTEDYI (242 aa)) constitute an ABC transporter domain. An ATP-binding site is contributed by 58-65 (GPSGCGKS).

It belongs to the ABC transporter superfamily. Phosphate importer (TC 3.A.1.7) family. The complex is composed of two ATP-binding proteins (PstB), two transmembrane proteins (PstC and PstA) and a solute-binding protein (PstS).

The protein localises to the cell inner membrane. It carries out the reaction phosphate(out) + ATP + H2O = ADP + 2 phosphate(in) + H(+). Its function is as follows. Part of the ABC transporter complex PstSACB involved in phosphate import. Responsible for energy coupling to the transport system. In Shewanella denitrificans (strain OS217 / ATCC BAA-1090 / DSM 15013), this protein is Phosphate import ATP-binding protein PstB.